Consider the following 123-residue polypeptide: uncharacterized protein (123 aa).

Residues 17–117 (LNNNAFLVDV…NNQDKGWKQN (101 aa)) enclose the Rhodanese domain.

This is an uncharacterized protein from Rickettsia prowazekii (strain Madrid E).